Consider the following 1746-residue polypeptide: Non-reducing polyketide synthase ptaA (1746 aa).

Residues 4–227 (NSGSGTSPWG…ALPVYGGLCH (224 aa)) form an N-terminal acylcarrier protein transacylase domain (SAT) region. Residues 361–796 (QSKIAIVGMS…GGNTTIAIEE (436 aa)) form the Ketosynthase family 3 (KS3) domain. Residues C534, H670, and H714 each act as for beta-ketoacyl synthase activity in the active site. The tract at residues 898-1218 (FAFTGQGASY…LGALHLAGIP (321 aa)) is malonyl-CoA:ACP transacylase (MAT) domain. The segment at 1286–1605 (TSTVHRVIGE…RLLLDRFFSA (320 aa)) is product template (PT) domain. The interval 1290–1425 (HRVIGETFDG…ATLFYGKAND (136 aa)) is N-terminal hotdog fold. Residues 1290-1600 (HRVIGETFDG…FRRYPRLLLD (311 aa)) form the PKS/mFAS DH domain. H1322 acts as the Proton acceptor; for dehydratase activity in catalysis. A C-terminal hotdog fold region spans residues 1452–1600 (VANRFSRNMA…FRRYPRLLLD (149 aa)). D1511 (proton donor; for dehydratase activity) is an active-site residue. The Carrier domain occupies 1671–1745 (DSITVKAMAL…DLRAWLLEYY (75 aa)). O-(pantetheine 4'-phosphoryl)serine is present on S1705.

The catalysed reaction is holo-[ACP] + 8 malonyl-CoA + 8 H(+) = atrochrysone carboxyl-[ACP] + 8 CO2 + 8 CoA + 2 H2O. Its pathway is secondary metabolite biosynthesis. In terms of biological role, non-reducing polyketide synthase; part of the gene cluster that mediates the biosynthesis of pestheic acid, a diphenyl ether which is a biosynthetic precursor of the unique chloropupukeananes. The biosynthesis initiates from condensation of acetate and malonate units catalyzed by the non-reducing PKS ptaA. As the ptaA protein is TE/CLC domain-deficient, hydrolysis and Claisen cyclization of the polyketide could be catalyzed by ptaB containing a beta-lactamase domain. The ptaB protein might hydrolyze the thioester bond between the ACP of ptaA and the intermediate to release atrochrysone carboxylic acid, which is spontaneously dehydrated to form endocrocin anthrone. Endocrocin anthrone is then converted to endocrocin, catalyzed by the anthrone oxygenase ptaC. Spontaneous decarboxylation of endocrocin occurs to generate emodin. An O-methyltransferase (ptaH or ptaI) could methylate emodin to form physcion. PtaJ could then catalyze the oxidative cleavage of physcion, and rotation of the intermediate could then afford desmethylisosulochrin. PtaF, a putative NADH-dependent oxidoreductase, might also participate in the oxidative cleavage step. Desmethylisosulochrin is then transformed by another O-methyltransferase (ptaH or ptaI) to form isosulochrin. Chlorination of isosulochrin by ptaM in the cyclohexadienone B ring then produces chloroisosulochrin. PtaE is responsible for the oxidative coupling reactions of both benzophenones isosulochrin and chloroisosulochrin to RES-1214-1 and pestheic acid respectively, regardless of chlorination. This is Non-reducing polyketide synthase ptaA from Pestalotiopsis fici (strain W106-1 / CGMCC3.15140).